We begin with the raw amino-acid sequence, 331 residues long: Proline-rich protein 33 (331 aa).

3 disordered regions span residues 1-112, 128-185, and 204-247; these read MGPQ…SVPR, SLES…PKVA, and APEP…APAS. Over residues 94–105 the composition is skewed to pro residues; the sequence is PEEPPVPRPPPG. Positions 149-169 are enriched in low complexity; sequence PPMAGPAAEAERVSSPAWASS. The segment covering 170–185 has biased composition (pro residues); it reads PTPPSGPHPCPVPKVA. A compositionally biased stretch (low complexity) spans 217 to 238; that stretch reads EPEVPTPTEQEVPAPTEQEVPA.

This Homo sapiens (Human) protein is Proline-rich protein 33 (PRR33).